A 171-amino-acid polypeptide reads, in one-letter code: Small ribosomal subunit protein uS4 (171 aa).

Positions 101–165 (RRLQTVVYRK…SSLSDELHPE (65 aa)) constitute an S4 RNA-binding domain. Residues 148 to 171 (SSVGFDEHSSLSDELHPERAEAQE) are disordered. Residues 152–171 (FDEHSSLSDELHPERAEAQE) are compositionally biased toward basic and acidic residues.

Belongs to the universal ribosomal protein uS4 family. Part of the 30S ribosomal subunit. Contacts protein S5. The interaction surface between S4 and S5 is involved in control of translational fidelity.

Functionally, one of the primary rRNA binding proteins, it binds directly to 16S rRNA where it nucleates assembly of the body of the 30S subunit. In terms of biological role, with S5 and S12 plays an important role in translational accuracy. The chain is Small ribosomal subunit protein uS4 from Haloarcula marismortui (strain ATCC 43049 / DSM 3752 / JCM 8966 / VKM B-1809) (Halobacterium marismortui).